A 291-amino-acid chain; its full sequence is Orotidine 5'-phosphate decarboxylase (291 aa).

The active-site Proton donor is K97.

Belongs to the OMP decarboxylase family. Type 2 subfamily.

It catalyses the reaction orotidine 5'-phosphate + H(+) = UMP + CO2. The protein operates within pyrimidine metabolism; UMP biosynthesis via de novo pathway; UMP from orotate: step 2/2. The polypeptide is Orotidine 5'-phosphate decarboxylase (Clostridium kluyveri (strain ATCC 8527 / DSM 555 / NBRC 12016 / NCIMB 10680 / K1)).